The chain runs to 105 residues: Small ribosomal subunit protein uS10 (105 aa).

The protein belongs to the universal ribosomal protein uS10 family. In terms of assembly, part of the 30S ribosomal subunit.

Involved in the binding of tRNA to the ribosomes. The chain is Small ribosomal subunit protein uS10 from Solidesulfovibrio magneticus (strain ATCC 700980 / DSM 13731 / RS-1) (Desulfovibrio magneticus).